The chain runs to 445 residues: Probable fructoselysine/psicoselysine transporter FrlA (445 aa).

12 helical membrane-spanning segments follow: residues 10–30 (LGFWAVLAIAVGTTVGSGIFV), 38–58 (AAGTPWLTVLAFVIGGLIVIP), 93–113 (GWASFWANDAPSLSIMALAIV), 121–141 (PIDPLLGKFIAAGLIIAFMLL), 155–175 (LITIAKIIPFTIVIGLGIFWF), 181–201 (AAPTTTAIGATGSFMALLAGI), 236–256 (CLLVLVLYTLLALVISGLMPF), 273–293 (IPALGSTAGIFVAITAMIVIL), 334–354 (IILQGALGIFFIFVSDLTSLL), 355–375 (GYFTLVMCFKNTLTFGSIIWC), 389–410 (AFGLMTTLAIASSLILVASTFV), and 417–435 (LICAVIVIATGLPAYAFWA).

The protein belongs to the amino acid-polyamine-organocation (APC) superfamily.

Its subcellular location is the cell inner membrane. The catalysed reaction is N(6)-(D-fructosyl)-L-lysine(in) = N(6)-(D-fructosyl)-L-lysine(out). It catalyses the reaction N(6)-(D-psicosyl)-L-lysine(in) = N(6)-(D-psicosyl)-L-lysine(out). Its pathway is carbohydrate metabolism; fructoselysine degradation. Its function is as follows. Is likely involved in the transport of fructoselysine and psicoselysine to the cytoplasm, where they are degraded. This is Probable fructoselysine/psicoselysine transporter FrlA from Escherichia coli (strain K12).